A 729-amino-acid chain; its full sequence is Polyribonucleotide nucleotidyltransferase (729 aa).

Positions 509 and 515 each coordinate Mg(2+). The KH domain occupies 575–634 (PRVISVKIPVDKIGEVIGPKGKMINQIQADSGAEITVEDDGTIYIGAVDGPSAESARSAI). The S1 motif domain occupies 646–718 (GERYLGTIVK…SRGKISLSPS (73 aa)).

It belongs to the polyribonucleotide nucleotidyltransferase family. It depends on Mg(2+) as a cofactor.

It is found in the cytoplasm. The catalysed reaction is RNA(n+1) + phosphate = RNA(n) + a ribonucleoside 5'-diphosphate. In terms of biological role, involved in mRNA degradation. Catalyzes the phosphorolysis of single-stranded polyribonucleotides processively in the 3'- to 5'-direction. The chain is Polyribonucleotide nucleotidyltransferase from Frankia casuarinae (strain DSM 45818 / CECT 9043 / HFP020203 / CcI3).